Reading from the N-terminus, the 444-residue chain is N-succinylarginine dihydrolase (444 aa).

Residues 19–28, Asn110, and 137–138 each bind substrate; these read AGLSFGNVAS and HR. Glu174 is an active-site residue. Arg214 lines the substrate pocket. His250 is an active-site residue. Positions 252 and 362 each coordinate substrate. The Nucleophile role is filled by Cys368.

Belongs to the succinylarginine dihydrolase family. As to quaternary structure, homodimer.

The enzyme catalyses N(2)-succinyl-L-arginine + 2 H2O + 2 H(+) = N(2)-succinyl-L-ornithine + 2 NH4(+) + CO2. It participates in amino-acid degradation; L-arginine degradation via AST pathway; L-glutamate and succinate from L-arginine: step 2/5. Functionally, catalyzes the hydrolysis of N(2)-succinylarginine into N(2)-succinylornithine, ammonia and CO(2). The sequence is that of N-succinylarginine dihydrolase from Shewanella baltica (strain OS223).